The chain runs to 268 residues: L-cystine-binding protein TcyA (268 aa).

Positions 1-19 are cleaved as a signal peptide; that stretch reads MKKALLALFMVVSIAALAA. Cysteine 20 is lipidated: N-palmitoyl cysteine. The S-diacylglycerol cysteine moiety is linked to residue cysteine 20.

The protein belongs to the bacterial solute-binding protein 3 family. As to quaternary structure, the complex is composed of two ATP-binding proteins (TcyC), two transmembrane proteins (TcyB) and a solute-binding protein (TcyA).

The protein resides in the cell membrane. Its function is as follows. Part of the ABC transporter complex TcyABC involved in L-cystine import. The sequence is that of L-cystine-binding protein TcyA (tcyA) from Bacillus subtilis (strain 168).